We begin with the raw amino-acid sequence, 54 residues long: UPF0391 membrane protein Tbd_2238 (54 aa).

2 consecutive transmembrane segments (helical) span residues 5 to 25 (ALVF…GIAA) and 28 to 48 (VGIA…TFVV).

This sequence belongs to the UPF0391 family.

The protein resides in the cell membrane. This chain is UPF0391 membrane protein Tbd_2238, found in Thiobacillus denitrificans (strain ATCC 25259 / T1).